The chain runs to 1323 residues: Traf2 and NCK-interacting protein kinase (1323 aa).

The Protein kinase domain occupies 25–289; sequence FELVELVGNG…TEQLMKHPFI (265 aa). Residues 31-39 and K54 contribute to the ATP site; that span reads VGNGTYGQV. Residue D153 is the Proton acceptor of the active site. Phosphothreonine is present on T187. Disordered regions lie at residues 284-347, 397-559, and 571-838; these read MKHP…LPGE, EQKE…LRPV, and SQGP…NEQY. Residues 288–307 are compositionally biased toward basic and acidic residues; it reads FIRDQPNERQVRIQLKDHID. Residues 290 to 1010 are mediates interaction with NEDD4; it reads RDQPNERQVR…EIRKYKKRFN (721 aa). Over residues 317–335 the composition is skewed to acidic residues; sequence DETEYEYSGSEEEEEENDS. 2 positions are modified to phosphoserine: S324 and S326. 3 stretches are compositionally biased toward basic and acidic residues: residues 397–470, 477–494, and 503–513; these read EQKE…ERDY, QRQE…HYKE, and AWAKEVEERSR. S531 and S541 each carry phosphoserine. T552 bears the Phosphothreonine mark. Phosphoserine occurs at positions 571, 579, 581, and 611. Residues 623–640 are compositionally biased toward basic and acidic residues; that stretch reads RIEKFDRSSWLRQEEDIP. 9 positions are modified to phosphoserine: S649, S651, S659, S672, S678, S691, S735, S737, and S740. Low complexity predominate over residues 691-726; it reads SSLQRTSSGSSSSSSTPSSQPSSQGGSQPGSQAGSS. Composition is skewed to basic and acidic residues over residues 746–760 and 772–790; these read EPSK…DITR and KELR…KKVT. A compositionally biased stretch (acidic residues) spans 797–810; sequence EESESSEEEEEDGE. Residue S922 is modified to Phosphoserine. The interval 939-960 is disordered; that stretch reads FVDPRVYQTSPTDEDEEDDESS. Over residues 950–959 the composition is skewed to acidic residues; the sequence is TDEDEEDDES. Residues 1010-1297 enclose the CNH domain; that stretch reads NSEILCAALW…KFLCERNDKV (288 aa).

The protein belongs to the protein kinase superfamily. STE Ser/Thr protein kinase family. STE20 subfamily. Interacts (via the CNH domain) with RAP2A (GTP-bound form preferentially); the interaction is direct and required for the activation of TNIK by RAP2A. Interacts with NEDD4; recruits RAP2A to NEDD4. Interacts with TRAF2 and NCK. Interacts with TCF7L2/TCF4 and CTNNB1; the interaction is direct. Interacts with TANC1. In terms of processing, autophosphorylated. Autophosphorylation is activated by RAP2A and induces association to the cytoskeletal fraction.

It localises to the nucleus. The protein resides in the cytoplasm. Its subcellular location is the recycling endosome. The protein localises to the cytoskeleton. It catalyses the reaction L-seryl-[protein] + ATP = O-phospho-L-seryl-[protein] + ADP + H(+). It carries out the reaction L-threonyl-[protein] + ATP = O-phospho-L-threonyl-[protein] + ADP + H(+). Serine/threonine kinase that acts as an essential activator of the Wnt signaling pathway. Recruited to promoters of Wnt target genes and required to activate their expression. May act by phosphorylating TCF4/TCF7L2. Appears to act upstream of the JUN N-terminal pathway. May play a role in the response to environmental stress. Part of a signaling complex composed of NEDD4, RAP2A and TNIK which regulates neuronal dendrite extension and arborization during development. More generally, it may play a role in cytoskeletal rearrangements and regulate cell spreading. Phosphorylates SMAD1 on Thr-322. Activator of the Hippo signaling pathway which plays a pivotal role in organ size control and tumor suppression by restricting proliferation and promoting apoptosis. MAP4Ks act in parallel to and are partially redundant with STK3/MST2 and STK4/MST2 in the phosphorylation and activation of LATS1/2, and establish MAP4Ks as components of the expanded Hippo pathway. The protein is Traf2 and NCK-interacting protein kinase (Tnik) of Mus musculus (Mouse).